Consider the following 1384-residue polypeptide: Protein Gawky (1384 aa).

4 disordered regions span residues 1–99 (MREA…VWTG), 148–227 (NGSS…DPRG), 263–335 (TAST…DDGT), and 447–501 (VGAP…SGWS). The tract at residues 1–205 (MREALFSQDG…HRGGNGSGAT (205 aa)) is required for interaction with AGO1. Sufficient for miRNA-mediated silencing stretches follow at residues 1–605 (MREA…SLGS) and 605–830 (SYAD…SVHL). Positions 15 to 24 (HVNQDTNWEV) are enriched in polar residues. Residues 150-171 (SSNITGSSGVATGSSGNSSNAG) show a composition bias toward low complexity. The interval 205–490 (TSSDPRDIRM…GVSWGNKQSK (286 aa)) is minimal N-terminal region required for miRNA-mediated silencing. Basic and acidic residues predominate over residues 208 to 225 (DPRDIRMIDPRDPIRGDP). Polar residues-rich tracts occupy residues 449 to 475 (APSS…NSWS) and 485 to 501 (GNKQ…SGWS). A UBA domain is found at 547-588 (IIKQSKQYRILVENGFKKEDVERALVIANMNIEEAADMLRAN). Disordered stretches follow at residues 607 to 626 (ADHN…PVNS), 809 to 841 (QNMQ…LRGH), 889 to 942 (TEFS…NKDW), 962 to 1022 (EPGK…LSSS), 1052 to 1102 (TSPL…GVQT), 1188 to 1221 (SENE…GVGT), and 1318 to 1368 (GTAN…PSGR). Residues 809-826 (QNMQPTSQQQQPQQQQLP) show a composition bias toward low complexity. Positions 862-1115 (YQGASNQQSR…NWTGGNTTWG (254 aa)) are not required for interaction with AGO1 or miRNAs or for localization to P-bodies but necessary for miRNA-mediated silencing and for interaction with pAbp. The segment covering 898–924 (TKQNLTANTSNINSLGLQNDSTWSTGR) has biased composition (polar residues). The interval 940 to 1215 (KDWSVAQPTS…TSSSGTSGGN (276 aa)) is sufficient for miRNA-mediated silencing. The segment covering 1010–1022 (SPTDLPPLSLSSS) has biased composition (low complexity). A compositionally biased stretch (polar residues) spans 1052–1061 (TSPLNKSSSR). Residues 1068 to 1084 (TANSNKSANSNASTPTT) are compositionally biased toward low complexity. The 73-residue stretch at 1117–1189 (SWLLLKNLTA…TTIFAESPSE (73 aa)) folds into the RRM domain. Residues 1188–1203 (SENEVQSIMQHLPQTP) are compositionally biased toward polar residues. The segment at 1200–1384 (PQTPSSTSSS…ISLVYSIVDD (185 aa)) is not required for interaction with AGO1 or miRNAs or for localization to P-bodies but necessary for miRNA-mediated silencing, dissociation from AGO1 and miRNAs and interaction with pAbp. The span at 1211 to 1220 (TSGGNVGGVG) shows a compositional bias: gly residues. The segment covering 1318–1349 (GTANSSGSKSSANNLASGQSSASNLTNSTNST) has biased composition (low complexity). Positions 1350–1365 (WRQTSQNQALQSQSRP) are enriched in polar residues.

The protein belongs to the GW182 family. As to quaternary structure, component of the miRNA-directed RNA-induced silencing complex (miRISC), composed of at least AGO1 and gw, which bind mature miRNAs and targets the selective destruction of homologous RNAs. Interacts (via N-terminal region) with AGO1 (via Piwi domain); the interaction is essential for localization of AGO1 in P-bodies and for miRNA-mediated silencing. Interacts with pAbp/PABPC1; this interaction interferes with the binding of pAbp to eIF4G and is required for miRNA-mediated silencing. Interacts with CCR4-NOT complex members Not1, Rga/NOT2, twin/CCR4, Pop2 and NOT3/5 and with PAN complex members CG8232/PAN2 and CG11486/PAN3.

The protein localises to the cytoplasm. The protein resides in the P-body. Functionally, required for gene silencing mediated by micro-RNAs (miRNAs). Silences both polyadenylated and deadenylated mRNAs. Required for miRNA-mediated translational repression and mRNA decay. Not required for miRNA target recognition. Necessary to initiate but not to maintain silencing. Promotes mRNA deadenylation through the recruitment of the CCR4-NOT and PAN complexes and promotes decapping by the DCP1-DCP2 complex. Dissociates from silenced mRNAs after deadenylation. Required for completion of nuclear divisions during early embryonic development. This Drosophila melanogaster (Fruit fly) protein is Protein Gawky.